The following is a 211-amino-acid chain: Ribonuclease HII (211 aa).

The region spanning 2 to 211 (MLILGVDEAG…TAQRLKASSV (210 aa)) is the RNase H type-2 domain. A divalent metal cation-binding residues include D8, E9, and D106.

It belongs to the RNase HII family. It depends on Mn(2+) as a cofactor. Mg(2+) is required as a cofactor.

Its subcellular location is the cytoplasm. The catalysed reaction is Endonucleolytic cleavage to 5'-phosphomonoester.. In terms of biological role, endonuclease that specifically degrades the RNA of RNA-DNA hybrids. In Methanothrix thermoacetophila (strain DSM 6194 / JCM 14653 / NBRC 101360 / PT) (Methanosaeta thermophila), this protein is Ribonuclease HII.